Consider the following 709-residue polypeptide: Dual specificity calcium/calmodulin-dependent 3',5'-cyclic nucleotide phosphodiesterase 1C (709 aa).

M1 is modified (N-acetylmethionine). Residues E123–R146 are calmodulin-binding. A PDEase domain is found at V151–E528. H228 acts as the Proton donor in catalysis. The Zn(2+) site is built by H232, H268, D269, and D376. D269 serves as a coordination point for Mg(2+). 2 disordered regions span residues L453–N495 and A523–L650. Residues V483–N495 show a composition bias toward polar residues. Positions A523–A556 are enriched in basic and acidic residues. Polar residues predominate over residues E571–A581. Basic and acidic residues-rich tracts occupy residues N582–S598 and D606–K633.

Belongs to the cyclic nucleotide phosphodiesterase family. PDE1 subfamily. In terms of assembly, homodimer. Zn(2+) is required as a cofactor. The cofactor is Mg(2+). In terms of tissue distribution, isoform PDE1C2 is present in the heart and brain and, at lower levels in the lung, liver, kidney and skeletal muscle. Isoform PDE1C1 is expressed in the heart and brain and, at lower levels in lung. Also expressed at low levels in uterus and testis.

Its subcellular location is the lysosome. The enzyme catalyses a nucleoside 3',5'-cyclic phosphate + H2O = a nucleoside 5'-phosphate + H(+). It catalyses the reaction 3',5'-cyclic GMP + H2O = GMP + H(+). The catalysed reaction is 3',5'-cyclic AMP + H2O = AMP + H(+). Its activity is regulated as follows. Type I PDE are activated by the binding of calmodulin in the presence of Ca(2+). In terms of biological role, calmodulin-dependent cyclic nucleotide phosphodiesterase with a dual specificity for the second messengers cAMP and cGMP, which are key regulators of many important physiological processes. Has a high affinity for both cAMP and cGMP. Modulates the amplitude and duration of the cAMP signal in sensory cilia in response to odorant stimulation, hence contributing to the generation of action potentials. Regulates smooth muscle cell proliferation. Regulates the stability of growth factor receptors, including PDGFRB. The protein is Dual specificity calcium/calmodulin-dependent 3',5'-cyclic nucleotide phosphodiesterase 1C of Homo sapiens (Human).